Consider the following 97-residue polypeptide: MTDLRHYDVIVSPVITEKSTIVSEHNQVVFNVARKATKPEIKAAVEALFGVKVTAVNTAVRKGKVKRFRGLVGRQSDVKKAIVTLAEGQSIDVSTGL.

This sequence belongs to the universal ribosomal protein uL23 family. In terms of assembly, part of the 50S ribosomal subunit. Contacts protein L29, and trigger factor when it is bound to the ribosome.

One of the early assembly proteins it binds 23S rRNA. One of the proteins that surrounds the polypeptide exit tunnel on the outside of the ribosome. Forms the main docking site for trigger factor binding to the ribosome. This Brucella abortus (strain S19) protein is Large ribosomal subunit protein uL23.